We begin with the raw amino-acid sequence, 438 residues long: Adenosylhomocysteinase (438 aa).

The substrate site is built by Thr64, Asp139, and Glu164. Residue 165–167 (TTT) participates in NAD(+) binding. Positions 194 and 198 each coordinate substrate. NAD(+) contacts are provided by residues Asn199, 228–233 (GYGDVG), Glu251, Asn286, 307–309 (IGH), and Asn352.

It belongs to the adenosylhomocysteinase family. NAD(+) serves as cofactor.

The protein resides in the cytoplasm. It catalyses the reaction S-adenosyl-L-homocysteine + H2O = L-homocysteine + adenosine. Its pathway is amino-acid biosynthesis; L-homocysteine biosynthesis; L-homocysteine from S-adenosyl-L-homocysteine: step 1/1. In terms of biological role, may play a key role in the regulation of the intracellular concentration of adenosylhomocysteine. The sequence is that of Adenosylhomocysteinase from Coxiella burnetii (strain Dugway 5J108-111).